A 625-amino-acid chain; its full sequence is Serine/threonine-protein kinase PknB (625 aa).

Over 1-331 (MTTPQHLSDR…KQRSTSVARW (331 aa)) the chain is Cytoplasmic. The Protein kinase domain maps to 11-274 (YELGEILGFG…TAAEMRADLI (264 aa)). ATP is bound by residues 17–25 (LGFGGMSEV), lysine 40, and 93–95 (EYV). Catalysis depends on aspartate 138, which acts as the Proton acceptor. ATP contacts are provided by residues 140 to 143 (KPAN) and aspartate 156. Residues asparagine 143 and aspartate 156 each contribute to the Mg(2+) site. Position 169 is a phosphoserine; by autocatalysis (serine 169). Phosphothreonine; by autocatalysis is present on residues threonine 171, threonine 173, and threonine 294. Serine 295 carries the post-translational modification Phosphoserine; by autocatalysis. The disordered stretch occupies residues 302 to 321 (ADRAGAATQDMPVPRPAGYS). Threonine 309 is modified (phosphothreonine; by autocatalysis). Residues 332–352 (LIAVAVLAVLTVVVTVAINMV) form a helical membrane-spanning segment. Residues 353–625 (GGNPRNVQVP…DAKITLSFAA (273 aa)) lie on the Extracellular side of the membrane. 4 PASTA domains span residues 355–421 (NPRN…NVST), 422–489 (GPEQ…VVGA), 490–556 (GPED…RVSK), and 557–625 (GNQF…SFAA). Residues 591–612 (DVRDSGQRTNAVVTQSPSAGTP) form a disordered region. A compositionally biased stretch (polar residues) spans 597–611 (QRTNAVVTQSPSAGT).

It belongs to the protein kinase superfamily. Ser/Thr protein kinase family. In terms of assembly, homodimer. Autophosphorylated. Dephosphorylated by PstP.

It is found in the cell membrane. It catalyses the reaction L-seryl-[protein] + ATP = O-phospho-L-seryl-[protein] + ADP + H(+). The catalysed reaction is L-threonyl-[protein] + ATP = O-phospho-L-threonyl-[protein] + ADP + H(+). With respect to regulation, by K-252a. Protein kinase that regulates many aspects of mycobacterial physiology. Is a key component of a signal transduction pathway that regulates cell growth, cell shape and cell division via phosphorylation of target proteins. Probably phosphorylates RseA. The polypeptide is Serine/threonine-protein kinase PknB (pknB) (Mycolicibacterium smegmatis (strain ATCC 700084 / mc(2)155) (Mycobacterium smegmatis)).